The chain runs to 213 residues: Ras-related protein Rab-19 (213 aa).

Ser24, Val26, Gly27, Lys28, Thr29, Cys30, Asp42, and Thr47 together coordinate GTP. A Mg(2+)-binding site is contributed by Thr29. Positions Ser37–Phe52 match the Switch 1 motif. Mg(2+)-binding residues include Thr47 and Asp70. Residues Ala72 to Ser87 carry the Switch 2 motif. GTP-binding residues include Gly73, Asn128, Lys129, Asp131, Ser159, Ala160, and Lys161. S-geranylgeranyl cysteine attachment occurs at residues Cys211 and Cys213. Position 213 is a cysteine methyl ester (Cys213).

It belongs to the small GTPase superfamily. Rab family. It depends on Mg(2+) as a cofactor.

The protein localises to the cell membrane. It carries out the reaction GTP + H2O = GDP + phosphate + H(+). With respect to regulation, regulated by guanine nucleotide exchange factors (GEFs) which promote the exchange of bound GDP for free GTP. Regulated by GTPase activating proteins (GAPs) which increase the GTP hydrolysis activity. Inhibited by GDP dissociation inhibitors (GDIs). In terms of biological role, the small GTPases Rab are key regulators of intracellular membrane trafficking, from the formation of transport vesicles to their fusion with membranes. Rabs cycle between an inactive GDP-bound form and an active GTP-bound form that is able to recruit to membranes different set of downstream effectors directly responsible for vesicle formation, movement, tethering and fusion. This Xenopus laevis (African clawed frog) protein is Ras-related protein Rab-19 (rab19).